We begin with the raw amino-acid sequence, 73 residues long: Ferredoxin-thioredoxin reductase, variable chain (73 aa).

The segment at 43–46 (NGKP) is interaction with ferredoxin.

It belongs to the ferredoxin thioredoxin reductase alpha subunit family. Heterodimer of subunit A (variable subunit) and subunit B (catalytic subunit). Heterodimeric FTR forms a complex with ferredoxin and thioredoxin.

In terms of biological role, variable subunit of the ferredoxin-thioredoxin reductase (FTR), which catalyzes the two-electron reduction of thioredoxins by the electrons provided by reduced ferredoxin. In Synechococcus sp. (strain ATCC 27144 / PCC 6301 / SAUG 1402/1) (Anacystis nidulans), this protein is Ferredoxin-thioredoxin reductase, variable chain (ftrV).